Here is a 109-residue protein sequence, read N- to C-terminus: Ubiquitin-related modifier 1 homolog (109 aa).

A 1-thioglycine modification is found at Gly-109. A Glycyl lysine isopeptide (Gly-Lys) (interchain with K-? in acceptor proteins) cross-link involves residue Gly-109.

The protein belongs to the URM1 family. C-terminal thiocarboxylation occurs in 2 steps, it is first acyl-adenylated (-COAMP) via the hesA/moeB/thiF part of the MOCS3 homolog, then thiocarboxylated (-COSH) via the rhodanese domain of the MOCS3 homolog.

The protein localises to the cytoplasm. It participates in tRNA modification; 5-methoxycarbonylmethyl-2-thiouridine-tRNA biosynthesis. Acts as a sulfur carrier required for 2-thiolation of mcm(5)S(2)U at tRNA wobble positions of cytosolic tRNA(Lys), tRNA(Glu) and tRNA(Gln). Serves as sulfur donor in tRNA 2-thiolation reaction by being thiocarboxylated (-COSH) at its C-terminus by MOCS3. The sulfur is then transferred to tRNA to form 2-thiolation of mcm(5)S(2)U. Also acts as a ubiquitin-like protein (UBL) that is covalently conjugated via an isopeptide bond to lysine residues of target proteins. The thiocarboxylated form serves as substrate for conjugation and oxidative stress specifically induces the formation of UBL-protein conjugates. This chain is Ubiquitin-related modifier 1 homolog, found in Culex quinquefasciatus (Southern house mosquito).